Consider the following 464-residue polypeptide: Ribosomal protein uS12 methylthiotransferase RimO (464 aa).

The MTTase N-terminal domain maps to P14–A125. Positions 23, 59, 88, 163, 167, and 170 each coordinate [4Fe-4S] cluster. Residues T149 to E378 enclose the Radical SAM core domain. In terms of domain architecture, TRAM spans H381–G452.

Belongs to the methylthiotransferase family. RimO subfamily. [4Fe-4S] cluster serves as cofactor.

The protein localises to the cytoplasm. The enzyme catalyses L-aspartate(89)-[ribosomal protein uS12]-hydrogen + (sulfur carrier)-SH + AH2 + 2 S-adenosyl-L-methionine = 3-methylsulfanyl-L-aspartate(89)-[ribosomal protein uS12]-hydrogen + (sulfur carrier)-H + 5'-deoxyadenosine + L-methionine + A + S-adenosyl-L-homocysteine + 2 H(+). Its function is as follows. Catalyzes the methylthiolation of an aspartic acid residue of ribosomal protein uS12. This is Ribosomal protein uS12 methylthiotransferase RimO from Parasynechococcus marenigrum (strain WH8102).